The chain runs to 466 residues: Argininosuccinate lyase (466 aa).

This sequence belongs to the lyase 1 family. Argininosuccinate lyase subfamily.

It is found in the cytoplasm. The enzyme catalyses 2-(N(omega)-L-arginino)succinate = fumarate + L-arginine. Its pathway is amino-acid biosynthesis; L-arginine biosynthesis; L-arginine from L-ornithine and carbamoyl phosphate: step 3/3. The polypeptide is Argininosuccinate lyase (Microcystis aeruginosa (strain NIES-843 / IAM M-2473)).